The following is a 312-amino-acid chain: Glycine--tRNA ligase alpha subunit (312 aa).

This sequence belongs to the class-II aminoacyl-tRNA synthetase family. Tetramer of two alpha and two beta subunits.

Its subcellular location is the cytoplasm. It carries out the reaction tRNA(Gly) + glycine + ATP = glycyl-tRNA(Gly) + AMP + diphosphate. The polypeptide is Glycine--tRNA ligase alpha subunit (Methylobacillus flagellatus (strain ATCC 51484 / DSM 6875 / VKM B-1610 / KT)).